A 360-amino-acid polypeptide reads, in one-letter code: Ribosomal RNA large subunit methyltransferase M (360 aa).

Residues serine 187, 220–223 (CPGG), aspartate 239, aspartate 259, and aspartate 276 each bind S-adenosyl-L-methionine. Catalysis depends on lysine 305, which acts as the Proton acceptor.

It belongs to the class I-like SAM-binding methyltransferase superfamily. RNA methyltransferase RlmE family. RlmM subfamily. As to quaternary structure, monomer.

It localises to the cytoplasm. The enzyme catalyses cytidine(2498) in 23S rRNA + S-adenosyl-L-methionine = 2'-O-methylcytidine(2498) in 23S rRNA + S-adenosyl-L-homocysteine + H(+). Functionally, catalyzes the 2'-O-methylation at nucleotide C2498 in 23S rRNA. In Shewanella sediminis (strain HAW-EB3), this protein is Ribosomal RNA large subunit methyltransferase M.